Here is a 309-residue protein sequence, read N- to C-terminus: Calcium homeostasis modulator protein 5 (309 aa).

The Cytoplasmic portion of the chain corresponds to methionine 1–lysine 15. Residues threonine 16–valine 37 form a helical membrane-spanning segment. Arginine 32 and valine 37 together coordinate a 1,2-diacyl-sn-glycero-3-phosphate. The Extracellular segment spans residues alanine 38–isoleucine 45. Disulfide bonds link cysteine 41–cysteine 127, cysteine 43–cysteine 158, and cysteine 142–cysteine 149. The chain crosses the membrane as a helical span at residues glutamate 46–asparagine 70. Over asparagine 71–valine 99 the chain is Cytoplasmic. A helical transmembrane segment spans residues leucine 100 to methionine 129. A 1,2-diacyl-sn-glycero-3-phosphate is bound at residue asparagine 121. Over serine 130–serine 174 the chain is Extracellular. Residues leucine 175–tyrosine 200 traverse the membrane as a helical segment. The Cytoplasmic segment spans residues alanine 201–leucine 309. Arginine 202 provides a ligand contact to a 1,2-diacyl-sn-glycero-3-phosphate.

It belongs to the CALHM family. In terms of assembly, oligomerizes to form undecameric cone-shaped channels.

It localises to the membrane. May assemble to form large pore channels with gating and ion conductance likely regulated by membrane lipids. This Rattus norvegicus (Rat) protein is Calcium homeostasis modulator protein 5.